A 409-amino-acid chain; its full sequence is Elongation factor Tu (409 aa).

The region spanning 10-214 is the tr-type G domain; that stretch reads KPHLNIGTIG…AVDSFIPTPE (205 aa). The G1 stretch occupies residues 19–26; the sequence is GHVDHGKT. 19–26 serves as a coordination point for GTP; the sequence is GHVDHGKT. Position 26 (threonine 26) interacts with Mg(2+). Residues 60 to 64 form a G2 region; it reads GITIN. Residues 81–84 are G3; it reads DCPG. GTP contacts are provided by residues 81–85 and 136–139; these read DCPGH and NKED. The G4 stretch occupies residues 136-139; the sequence is NKED. The interval 174-176 is G5; the sequence is SGL.

Belongs to the TRAFAC class translation factor GTPase superfamily. Classic translation factor GTPase family. EF-Tu/EF-1A subfamily. Monomer.

It is found in the cytoplasm. The catalysed reaction is GTP + H2O = GDP + phosphate + H(+). In terms of biological role, GTP hydrolase that promotes the GTP-dependent binding of aminoacyl-tRNA to the A-site of ribosomes during protein biosynthesis. The polypeptide is Elongation factor Tu (Nostoc punctiforme (strain ATCC 29133 / PCC 73102)).